The following is a 147-amino-acid chain: Large ribosomal subunit protein uL22c (147 aa).

Belongs to the universal ribosomal protein uL22 family. Part of the 50S ribosomal subunit.

The protein resides in the plastid. It is found in the chloroplast. This protein binds specifically to 23S rRNA. Its function is as follows. The globular domain of the protein is located near the polypeptide exit tunnel on the outside of the subunit, while an extended beta-hairpin is found that lines the wall of the exit tunnel in the center of the 70S ribosome. This Lolium perenne (Perennial ryegrass) protein is Large ribosomal subunit protein uL22c (rpl22).